The following is a 383-amino-acid chain: Transcription termination factor Rho (383 aa).

Positions 1–22 (MTIETTTKKRPRAARPPRPRES) are disordered. A compositionally biased stretch (basic residues) spans 8–17 (KKRPRAARPP). The 68-residue stretch at 26–93 (LETVAGLLDV…AEVESVNGST (68 aa)) folds into the Rho RNA-BD domain. Residues 132–137 (GKGQRG), 144–149 (KAGKTM), and R175 contribute to the ATP site.

Belongs to the Rho family. In terms of assembly, homohexamer. The homohexamer assembles into an open ring structure.

Its function is as follows. Facilitates transcription termination by a mechanism that involves Rho binding to the nascent RNA, activation of Rho's RNA-dependent ATPase activity, and release of the mRNA from the DNA template. The protein is Transcription termination factor Rho of Streptosporangium roseum (strain ATCC 12428 / DSM 43021 / JCM 3005 / KCTC 9067 / NCIMB 10171 / NRRL 2505 / NI 9100).